Consider the following 266-residue polypeptide: Glucosamine-6-phosphate deaminase (266 aa).

The Proton acceptor; for enolization step role is filled by aspartate 72. Aspartate 141 serves as the catalytic For ring-opening step. Histidine 143 functions as the Proton acceptor; for ring-opening step in the catalytic mechanism. Glutamate 148 serves as the catalytic For ring-opening step.

Belongs to the glucosamine/galactosamine-6-phosphate isomerase family. NagB subfamily. In terms of assembly, homohexamer.

It carries out the reaction alpha-D-glucosamine 6-phosphate + H2O = beta-D-fructose 6-phosphate + NH4(+). It participates in amino-sugar metabolism; N-acetylneuraminate degradation; D-fructose 6-phosphate from N-acetylneuraminate: step 5/5. Its activity is regulated as follows. Allosterically activated by N-acetylglucosamine 6-phosphate (GlcNAc6P). Catalyzes the reversible isomerization-deamination of glucosamine 6-phosphate (GlcN6P) to form fructose 6-phosphate (Fru6P) and ammonium ion. In Vibrio vulnificus (strain CMCP6), this protein is Glucosamine-6-phosphate deaminase.